We begin with the raw amino-acid sequence, 116 residues long: Ribonuclease P protein component (116 aa).

This sequence belongs to the RnpA family. Consists of a catalytic RNA component (M1 or rnpB) and a protein subunit.

The catalysed reaction is Endonucleolytic cleavage of RNA, removing 5'-extranucleotides from tRNA precursor.. Its function is as follows. RNaseP catalyzes the removal of the 5'-leader sequence from pre-tRNA to produce the mature 5'-terminus. It can also cleave other RNA substrates such as 4.5S RNA. The protein component plays an auxiliary but essential role in vivo by binding to the 5'-leader sequence and broadening the substrate specificity of the ribozyme. This is Ribonuclease P protein component from Bacillus velezensis (strain DSM 23117 / BGSC 10A6 / LMG 26770 / FZB42) (Bacillus amyloliquefaciens subsp. plantarum).